The sequence spans 149 residues: Large ribosomal subunit protein bL9 (149 aa).

The protein belongs to the bacterial ribosomal protein bL9 family.

Its function is as follows. Binds to the 23S rRNA. The sequence is that of Large ribosomal subunit protein bL9 from Campylobacter curvus (strain 525.92).